Consider the following 320-residue polypeptide: GTPase Era (320 aa).

The region spanning 25–193 (HCGFIAIVGR…RKHVRNHLPK (169 aa)) is the Era-type G domain. Residues 33-40 (GRPNVGKS) are G1. 33-40 (GRPNVGKS) serves as a coordination point for GTP. The tract at residues 59-63 (QTTRH) is G2. Residues 80–83 (DTPG) form a G3 region. GTP-binding positions include 80 to 84 (DTPGL) and 142 to 145 (NKVD). A G4 region spans residues 142–145 (NKVD). The tract at residues 172 to 174 (ISA) is G5. One can recognise a KH type-2 domain in the interval 216–302 (VREKLMRFTG…YLETWVKVKS (87 aa)).

It belongs to the TRAFAC class TrmE-Era-EngA-EngB-Septin-like GTPase superfamily. Era GTPase family. As to quaternary structure, monomer.

The protein resides in the cytoplasm. It is found in the cell inner membrane. Its function is as follows. An essential GTPase that binds both GDP and GTP, with rapid nucleotide exchange. Plays a role in 16S rRNA processing and 30S ribosomal subunit biogenesis and possibly also in cell cycle regulation and energy metabolism. In Vibrio parahaemolyticus serotype O3:K6 (strain RIMD 2210633), this protein is GTPase Era.